Consider the following 877-residue polypeptide: Lipophilic envelope-spanning tunnel protein B (877 aa).

Over Met-1–Arg-19 the chain is Cytoplasmic. Residues Ile-20–Asp-40 form a helical membrane-spanning segment. At Ser-41 to Lys-877 the chain is on the periplasmic side. MCE/MlaD stretches follow at residues Gly-46–Asp-149, Asp-160–Glu-272, Arg-279–Gly-382, Asp-391–Ala-499, Thr-515–Ala-625, Gly-634–Ala-737, and Asp-746–Glu-862.

Belongs to the PqiB family. As to quaternary structure, homohexamer. May interact with LetA in the inner membrane. May also interact with partners in the outer membrane.

The protein localises to the cell inner membrane. Forms a tunnel that spans the entire periplasmic space. Is probably involved in the transport of lipids between the inner membrane and the outer membrane through the tunnel. Forms a dynamic tunnel sufficiently long to mediate lipid transport directly between the two membranes without the need for a shuttle protein. Binds phospholipids. Lipids bind inside the tunnel. Required for outer membrane homeostasis. Contributes to membrane integrity. This chain is Lipophilic envelope-spanning tunnel protein B, found in Escherichia coli (strain K12).